Reading from the N-terminus, the 121-residue chain is Small ribosomal subunit protein uS13 (121 aa).

The segment at 96–121 (PVRGQNTKNNARTRKGKAVAIAGKKK) is disordered. Over residues 106-121 (ARTRKGKAVAIAGKKK) the composition is skewed to basic residues.

It belongs to the universal ribosomal protein uS13 family. As to quaternary structure, part of the 30S ribosomal subunit. Forms a loose heterodimer with protein S19. Forms two bridges to the 50S subunit in the 70S ribosome.

In terms of biological role, located at the top of the head of the 30S subunit, it contacts several helices of the 16S rRNA. In the 70S ribosome it contacts the 23S rRNA (bridge B1a) and protein L5 of the 50S subunit (bridge B1b), connecting the 2 subunits; these bridges are implicated in subunit movement. Contacts the tRNAs in the A and P-sites. This is Small ribosomal subunit protein uS13 from Streptococcus agalactiae serotype Ia (strain ATCC 27591 / A909 / CDC SS700).